Here is a 274-residue protein sequence, read N- to C-terminus: Putative phosphatase BUsg_029 (274 aa).

The active-site Nucleophile is the D8. Residue D8 participates in Mg(2+) binding. Residue L9 participates in phosphate binding. D10 provides a ligand contact to Mg(2+). Residues 42-43 (SG) and K191 each bind phosphate. D214 is a binding site for Mg(2+). N217 provides a ligand contact to phosphate.

This sequence belongs to the HAD-like hydrolase superfamily. Cof family. The cofactor is Mg(2+).

The polypeptide is Putative phosphatase BUsg_029 (Buchnera aphidicola subsp. Schizaphis graminum (strain Sg)).